The primary structure comprises 434 residues: MKAAQFFLYSLLFFASAALSSANIAEFDEYWQKKSKVAQAKAKKAYTPHPEEVTNHFNKAVHSSFEGNSTRRNLRTNKLGQCLATNPIDRCWRCKKNWSANRKDLVKCVKGFGRKTTGGAAGEIYVVTDPSDDSLTDPKFGTLRWGVIQDRPLWIIFGKSMVIRLKQELIINNDKTIDGRGANVQIAGGAQLTVQFVHNVIIHGIHIHDIKPGEGGLIRDSEKHSGIRTRSDGDGISIIGSSNIWIDHVSLARCSDGLIDVILGSTAITISNCHLTEHDDVMLLGASDTYTQDEIMQVTVAFNHFGRGLVQRMPRCRYGFVHVVNNDYTHWIMYAVGGSQHPTIISQGNRYIAPHIEAAKEVTKRDYAEPAEWSKWTWKSQGDLFVSGAFFVESGGPFENKYSKKDLIKAKPGTFVQRLTRFSGALNCKENMEC.

A signal peptide spans 1–22 (MKAAQFFLYSLLFFASAALSSA). Residues Asn-68 and Asn-97 are each glycosylated (N-linked (GlcNAc...) asparagine). Ca(2+) is bound by residues Asp-232, Asp-256, and Asp-260. The active site involves Arg-312.

It belongs to the polysaccharide lyase 1 family. It depends on Ca(2+) as a cofactor.

The catalysed reaction is Eliminative cleavage of (1-&gt;4)-alpha-D-galacturonan to give oligosaccharides with 4-deoxy-alpha-D-galact-4-enuronosyl groups at their non-reducing ends.. It functions in the pathway glycan metabolism; pectin degradation; 2-dehydro-3-deoxy-D-gluconate from pectin: step 2/5. This Lilium longiflorum (Trumpet lily) protein is Pectate lyase.